Here is a 576-residue protein sequence, read N- to C-terminus: Arginine--tRNA ligase (576 aa).

A 'HIGH' region motif is present at residues Ala126–His136.

Belongs to the class-I aminoacyl-tRNA synthetase family. Monomer.

Its subcellular location is the cytoplasm. It catalyses the reaction tRNA(Arg) + L-arginine + ATP = L-arginyl-tRNA(Arg) + AMP + diphosphate. The chain is Arginine--tRNA ligase from Rickettsia akari (strain Hartford).